A 560-amino-acid polypeptide reads, in one-letter code: Involucrin (560 aa).

A compositionally biased stretch (polar residues) spans 1–15; it reads MSQQHTLPVTLSPAL. 3 disordered regions span residues 1–131, 150–359, and 404–534; these read MSQQ…KLLD, EQLL…LVQQ, and GQLK…QSAL. Residues 76-91 show a composition bias toward low complexity; the sequence is EQQQQEPQEQELQQQH. Basic and acidic residues-rich tracts occupy residues 92–115 and 159–172; these read WEQHEEYQKAENPEQQLKQEKAQR and QEGHLKHLEQREGQ. The segment covering 189–211 has biased composition (low complexity); the sequence is QKGQLELPEQQEGQLELPEQQEG. Composition is skewed to basic and acidic residues over residues 212-231, 252-264, and 274-320; these read QLKHLEQQEGQLKHLEHQEG, QLKHLDQQEKQPE, and KHLE…EHQE. Positions 321–334 are enriched in low complexity; the sequence is GQLGLPEQQVQQLK. Basic and acidic residues-rich tracts occupy residues 335-353, 404-420, 454-463, 476-486, and 494-510; these read QLEKEEGQPKHLEEEEGQL, GQLKHLEEQEGQLKHLE, QLKHLEKQEA, KHLEQQEKQLE, and QLKHLEQQEGQLKDLEQ.

Belongs to the involucrin family. Directly or indirectly cross-linked to cornifelin (CNFN). In terms of processing, substrate of transglutaminase. Specific glutamines or lysines are cross-linked to keratins, desmoplakin and to inter involucrin molecules. In terms of tissue distribution, keratinocytes of epidermis and other stratified squamous epithelia.

It localises to the cytoplasm. Part of the insoluble cornified cell envelope (CE) of stratified squamous epithelia. The sequence is that of Involucrin (IVL) from Pan paniscus (Pygmy chimpanzee).